The primary structure comprises 579 residues: L-ascorbate oxidase (579 aa).

Positions 1–30 (MLQMGKAREPNFLILFFFGLILAFGISSEG) are cleaved as a signal peptide. Plastocyanin-like domains follow at residues 33–152 (IRHY…LIVD) and 164–330 (DGEI…NYLP). 3 cysteine pairs are disulfide-bonded: Cys-49-Cys-231, Cys-111-Cys-568, and Cys-210-Cys-223. Cu cation is bound by residues His-90 and His-92. Asn-122 carries an N-linked (GlcNAc...) asparagine glycan. Cu cation is bound by residues His-134 and His-136. N-linked (GlcNAc...) asparagine glycans are attached at residues Asn-355 and Asn-470. The Plastocyanin-like 3 domain occupies 374-553 (NRRIFLLNTQ…HMGMGVVFAE (180 aa)). Cu cation-binding residues include His-475, His-478, His-480, His-536, Cys-537, His-538, His-542, and Met-547.

It belongs to the multicopper oxidase family. Dimer. It depends on Cu cation as a cofactor.

Its subcellular location is the secreted. The enzyme catalyses 4 L-ascorbate + O2 = 4 monodehydro-L-ascorbate radical + 2 H2O. Functionally, may be involved in a redox system involving ascorbic acid. In Cucurbita maxima (Pumpkin), this protein is L-ascorbate oxidase (AAO).